A 942-amino-acid polypeptide reads, in one-letter code: Nuclear receptor coactivator 7 (942 aa).

Met-1 is subject to N-acetylmethionine. Positions 1–12 (MDTKEEKKERKQ) are enriched in basic and acidic residues. Positions 1-46 (MDTKEEKKERKQSYFARLKKKKQAKQNAETASAVATRTHTGKEDNN) are disordered. A coiled-coil region spans residues 4–29 (KEEKKERKQSYFARLKKKKQAKQNAE). Over residues 25–38 (KQNAETASAVATRT) the composition is skewed to polar residues. At Ser-89 the chain carries Phosphoserine. The 44-residue stretch at 114-157 (MEYTAGNQDTLNSIALKFNITPNKLVELNKLFTHTIVPGQVLFV) folds into the LysM domain. Thr-134 bears the Phosphothreonine mark. The tract at residues 161-188 (NSPSSTLRLSSSSPGATVSPSSSDAEYD) is disordered. A compositionally biased stretch (low complexity) spans 162–183 (SPSSTLRLSSSSPGATVSPSSS). A phosphoserine mark is found at Ser-179, Ser-183, Ser-208, Ser-209, and Ser-211. Residues 324–416 (KFKSINKEKR…ENFLGEDDDF (93 aa)) are disordered. Polar residues predominate over residues 356–368 (GHTPTKPSGSSVS). Positions 369-381 (EKLKKLDSSRETS) are enriched in basic and acidic residues. Ser-441, Ser-500, and Ser-502 each carry phosphoserine. The TLDc domain maps to 781–942 (ALLENMHIEQ…VQDLEVWAFD (162 aa)).

This sequence belongs to the OXR1 family. Interacts with ESR1, ESR2A, ESR2B, THRB, PPARG and RARA in a ligand-inducible manner. Interacts with the heterodimer AHR-ARNT. Highly expressed in brain. Weakly expressed in mammary gland, ovary, uterus, prostate, stomach, bladder, spinal cord and pancreas. Expressed in cancer cell line.

Its subcellular location is the nucleus. Enhances the transcriptional activities of several nuclear receptors. Involved in the coactivation of different nuclear receptors, such as ESR1, THRB, PPARG and RARA. This chain is Nuclear receptor coactivator 7 (NCOA7), found in Homo sapiens (Human).